The primary structure comprises 182 residues: MKELNKKEKEYLLNSIRAIKDFPKPGIVFRDITTLLNDKEAFNFLMDHLTARYENFGIDFIAGIESRGFIFGAALAARLRLPFVPIRKPKKLPYITISQKYSLEYGVDEVQIHIDAFGEKEDARVLLIDDLIATGGTAKASVELIDQTKAKCVEACFLIDLKELGGSGTLKKLTKIYSVLEI.

Belongs to the purine/pyrimidine phosphoribosyltransferase family. As to quaternary structure, homodimer.

It localises to the cytoplasm. It catalyses the reaction AMP + diphosphate = 5-phospho-alpha-D-ribose 1-diphosphate + adenine. It participates in purine metabolism; AMP biosynthesis via salvage pathway; AMP from adenine: step 1/1. Functionally, catalyzes a salvage reaction resulting in the formation of AMP, that is energically less costly than de novo synthesis. The protein is Adenine phosphoribosyltransferase of Campylobacter curvus (strain 525.92).